The primary structure comprises 465 residues: Cysteine--tRNA ligase (465 aa).

Zn(2+) is bound at residue Cys-30. The 'HIGH' region signature appears at 32–42 (ITVYDYCHVGH). Zn(2+) contacts are provided by Cys-214, His-239, and Glu-243. The 'KMSKS' region motif lies at 271 to 275 (KMSKS). Residue Lys-274 coordinates ATP.

The protein belongs to the class-I aminoacyl-tRNA synthetase family. Monomer. Zn(2+) is required as a cofactor.

The protein resides in the cytoplasm. It carries out the reaction tRNA(Cys) + L-cysteine + ATP = L-cysteinyl-tRNA(Cys) + AMP + diphosphate. The sequence is that of Cysteine--tRNA ligase from Burkholderia multivorans (strain ATCC 17616 / 249).